We begin with the raw amino-acid sequence, 203 residues long: Holliday junction branch migration complex subunit RuvA (203 aa).

Positions 1-64 (MIGRLRGIIL…EDAQLLYGFN (64 aa)) are domain I. Residues 65 to 142 (NKQERMLFRE…KGLHGDLFTP (78 aa)) form a domain II region. Residues 143-154 (AADLVLTSPNGP) are flexible linker. Residues 155–203 (TSDDAEQEAVAALVALGYKPQEASRMVSKIAKPDANSETLIREALRAAL) are domain III.

It belongs to the RuvA family. As to quaternary structure, homotetramer. Forms an RuvA(8)-RuvB(12)-Holliday junction (HJ) complex. HJ DNA is sandwiched between 2 RuvA tetramers; dsDNA enters through RuvA and exits via RuvB. An RuvB hexamer assembles on each DNA strand where it exits the tetramer. Each RuvB hexamer is contacted by two RuvA subunits (via domain III) on 2 adjacent RuvB subunits; this complex drives branch migration. In the full resolvosome a probable DNA-RuvA(4)-RuvB(12)-RuvC(2) complex forms which resolves the HJ.

It is found in the cytoplasm. Its function is as follows. The RuvA-RuvB-RuvC complex processes Holliday junction (HJ) DNA during genetic recombination and DNA repair, while the RuvA-RuvB complex plays an important role in the rescue of blocked DNA replication forks via replication fork reversal (RFR). RuvA specifically binds to HJ cruciform DNA, conferring on it an open structure. The RuvB hexamer acts as an ATP-dependent pump, pulling dsDNA into and through the RuvAB complex. HJ branch migration allows RuvC to scan DNA until it finds its consensus sequence, where it cleaves and resolves the cruciform DNA. The chain is Holliday junction branch migration complex subunit RuvA from Enterobacter sp. (strain 638).